Here is a 44-residue protein sequence, read N- to C-terminus: Thymosin beta-4 (44 aa).

Residues 1 to 44 (MSDKPDMGEIQKFNKSKLKKTETQEKNPLPSKETIEQEKQAGES) are disordered. Residue S2 is modified to N-acetylserine. Position 2 is a phosphoserine (S2). An N6-acetyllysine modification is found at K4. K12 bears the N6-acetyllysine; alternate mark. K12 participates in a covalent cross-link: Glycyl lysine isopeptide (Lys-Gly) (interchain with G-Cter in SUMO2); alternate. T23 bears the Phosphothreonine mark. The residue at position 26 (K26) is an N6-acetyllysine. The residue at position 31 (S31) is a Phosphoserine. N6-acetyllysine is present on K32. Basic and acidic residues predominate over residues 33-44 (ETIEQEKQAGES). Residue T34 is modified to Phosphothreonine. Residue K39 is modified to N6-acetyllysine.

The protein belongs to the thymosin beta family. Identified in a complex composed of ACTA1, COBL, GSN AND TMSB4X. Interacts with SERPINB1. Post-translationally, acSDKP is inactivated by ACE, which removes the dipeptide Lys-Pro from its C-terminus.

The protein resides in the cytoplasm. Its subcellular location is the cytoskeleton. Its function is as follows. Plays an important role in the organization of the cytoskeleton. Binds to and sequesters actin monomers (G actin) and therefore inhibits actin polymerization. In terms of biological role, potent inhibitor of bone marrow derived stem cell differentiation. Acts by inhibits the entry of hematopoietic pluripotent stem cells into the S-phase. The sequence is that of Thymosin beta-4 (TMSB4) from Notamacropus eugenii (Tammar wallaby).